The primary structure comprises 150 residues: Peptide methionine sulfoxide reductase MsrB (150 aa).

The MsrB domain maps to 9–132 (EAELKRTLTK…NSAALKFIPF (124 aa)). The Nucleophile role is filled by C121.

This sequence belongs to the MsrB Met sulfoxide reductase family.

It carries out the reaction L-methionyl-[protein] + [thioredoxin]-disulfide + H2O = L-methionyl-(R)-S-oxide-[protein] + [thioredoxin]-dithiol. The sequence is that of Peptide methionine sulfoxide reductase MsrB from Mycoplasma genitalium (strain ATCC 33530 / DSM 19775 / NCTC 10195 / G37) (Mycoplasmoides genitalium).